Consider the following 323-residue polypeptide: MAVPPVEMYSGSFWNRMRKPLPLRTQVIRFTVVFVIVSFILAVALQITHERMPDPKVTKPLPDLGFEVLHKYPFLFSVADCCIGFLNILSVFTAFKLYLLHRHCVGSGEPELPCNIPGVSRFFLSVWLCKENCRIELRNVHTIAWIRFITSYALLLLSRSVIMVVTSLPNPDDLCQDPPKIENRVKDVILTVLTAGAGSIHCGDLMYSGHTVILTLHLMFHWIYGAMVHWSFRPVVTVVAIFGYYCIVASRFHYTDDVLVAIYLTIATFIAVGHNADGAPWQLQLFIRWLPCCGANSREVTEDGVPVAIVIKNEEMMNFEGKS.

Residues 1–26 lie on the Cytoplasmic side of the membrane; sequence MAVPPVEMYSGSFWNRMRKPLPLRTQ. A helical membrane pass occupies residues 27-47; the sequence is VIRFTVVFVIVSFILAVALQI. At 48-73 the chain is on the extracellular side; that stretch reads THERMPDPKVTKPLPDLGFEVLHKYP. A helical transmembrane segment spans residues 74 to 94; it reads FLFSVADCCIGFLNILSVFTA. At 95–147 the chain is on the cytoplasmic side; that stretch reads FKLYLLHRHCVGSGEPELPCNIPGVSRFFLSVWLCKENCRIELRNVHTIAWIR. A helical transmembrane segment spans residues 148–168; it reads FITSYALLLLSRSVIMVVTSL. The Extracellular segment spans residues 169–211; it reads PNPDDLCQDPPKIENRVKDVILTVLTAGAGSIHCGDLMYSGHT. Residue H210 is part of the active site. A helical transmembrane segment spans residues 212–232; the sequence is VILTLHLMFHWIYGAMVHWSF. A topological domain (cytoplasmic) is located at residue R233. The chain crosses the membrane as a helical span at residues 234-254; sequence PVVTVVAIFGYYCIVASRFHY. Residues H253 and D257 contribute to the active site. Residues 255 to 257 lie on the Extracellular side of the membrane; the sequence is TDD. The helical transmembrane segment at 258–278 threads the bilayer; sequence VLVAIYLTIATFIAVGHNADG. Residues 279–323 are Cytoplasmic-facing; it reads APWQLQLFIRWLPCCGANSREVTEDGVPVAIVIKNEEMMNFEGKS.

This sequence belongs to the sphingomyelin synthase family.

It is found in the membrane. Its function is as follows. Bidirectional lipid ethanolaminephosphotransferase capable of converting phosphatidylethanolamine (PE) and ceramide to ethanolamine-phosphorylceramide (EPC) and diacylglycerol (DAG) and vice versa. Direction is dependent on the relative concentrations of DAG and ceramide as phosphoethanolamine acceptors. Does not function strictly as a SM synthase. Essential for viability of the pathogenic bloodstream stage of this human protozoan parasite and, consequently, can be considered as potential drug target. In Trypanosoma brucei brucei (strain 927/4 GUTat10.1), this protein is Phosphatidylethanolamine:ceramide ethanolaminephosphotransferase.